Reading from the N-terminus, the 500-residue chain is MSNMQKKTDVILIGAGIMSATLGSLLKELAPEWEIKMFEKLEGAGEESSNEWNNAGTGHSALCELNYTSEKPDGSIDIKKALKINEQFQLSRQFWSYLVNSNLIRNPQKFIMPIPHMSLVQGEKNVTFLKKRFKALSNIPLFQGMEFSDDPEKLKEWMPLIMEGRTSNEPIAATKMESGTDVNFGALTRMLFEHLQNKNVELNYKHSVENIKRMKNGLWEVKVHDMNNGKIEYHTAKFVFIGAGGGSLPLLQKTGIPESKHIGGFPVSGLFMVCNNPKVIEKHHAKVYGKAKVGAPPMSVPHLDTRYIDNKKTLLFGPFAGFSPKFLKTGSNLDLLGSVKPNNVLTMLAAGVKEMALTKYLIQQVMLSNEKRIEELREFIPNAKGEDWDVVVAGQRVQVIKDTETGGKGTLQFGTEVVSAADGSIAALLGASPGASTAVNVMLEVLEKCFPQYMEKWEEKIKHMIPSYGISLVENPKLFQEIHTSTSKTLGLSKKEAVYS.

The protein belongs to the MQO family. It depends on FAD as a cofactor.

It catalyses the reaction (S)-malate + a quinone = a quinol + oxaloacetate. It functions in the pathway carbohydrate metabolism; tricarboxylic acid cycle; oxaloacetate from (S)-malate (quinone route): step 1/1. The polypeptide is Probable malate:quinone oxidoreductase (Bacillus cytotoxicus (strain DSM 22905 / CIP 110041 / 391-98 / NVH 391-98)).